The sequence spans 283 residues: Probable endonuclease 4 (283 aa).

Residues H69, H113, E148, D182, H185, H217, D230, H232, and E262 each coordinate Zn(2+).

It belongs to the AP endonuclease 2 family. Zn(2+) is required as a cofactor.

It catalyses the reaction Endonucleolytic cleavage to 5'-phosphooligonucleotide end-products.. In terms of biological role, endonuclease IV plays a role in DNA repair. It cleaves phosphodiester bonds at apurinic or apyrimidinic (AP) sites, generating a 3'-hydroxyl group and a 5'-terminal sugar phosphate. This chain is Probable endonuclease 4, found in Bifidobacterium longum (strain DJO10A).